The sequence spans 556 residues: 2-succinyl-5-enolpyruvyl-6-hydroxy-3-cyclohexene-1-carboxylate synthase (556 aa).

The protein belongs to the TPP enzyme family. MenD subfamily. Homodimer. Requires Mg(2+) as cofactor. It depends on Mn(2+) as a cofactor. Thiamine diphosphate is required as a cofactor.

It catalyses the reaction isochorismate + 2-oxoglutarate + H(+) = 5-enolpyruvoyl-6-hydroxy-2-succinyl-cyclohex-3-ene-1-carboxylate + CO2. It participates in quinol/quinone metabolism; 1,4-dihydroxy-2-naphthoate biosynthesis; 1,4-dihydroxy-2-naphthoate from chorismate: step 2/7. The protein operates within quinol/quinone metabolism; menaquinone biosynthesis. Its function is as follows. Catalyzes the thiamine diphosphate-dependent decarboxylation of 2-oxoglutarate and the subsequent addition of the resulting succinic semialdehyde-thiamine pyrophosphate anion to isochorismate to yield 2-succinyl-5-enolpyruvyl-6-hydroxy-3-cyclohexene-1-carboxylate (SEPHCHC). This is 2-succinyl-5-enolpyruvyl-6-hydroxy-3-cyclohexene-1-carboxylate synthase from Escherichia coli (strain ATCC 8739 / DSM 1576 / NBRC 3972 / NCIMB 8545 / WDCM 00012 / Crooks).